The following is a 152-amino-acid chain: Arginine repressor (152 aa).

This sequence belongs to the ArgR family.

Its subcellular location is the cytoplasm. The protein operates within amino-acid biosynthesis; L-arginine biosynthesis [regulation]. Regulates arginine biosynthesis genes. The chain is Arginine repressor from Lactococcus lactis subsp. lactis (strain IL1403) (Streptococcus lactis).